A 70-amino-acid chain; its full sequence is Myotoxin (70 aa).

A signal peptide spans 1-22; sequence MKILYLLFAFLFLAFLSEPGNA. Cystine bridges form between C26/C58, C33/C52, and C40/C59.

It belongs to the crotamine-myotoxin family. As to quaternary structure, monomer. As to expression, expressed by the venom gland.

The protein resides in the secreted. Its function is as follows. Cationic peptide that possesses multiple functions. It acts as a cell-penetrating peptide (CPP), and as a potent voltage-gated potassium channel (Kv) inhibitor. It exhibits antimicrobial activities, hind limb paralysis, and severe muscle necrosis by a non-enzymatic mechanism. This Crotalus helleri (Southern pacific rattlesnake) protein is Myotoxin.